The following is a 193-amino-acid chain: MKLKKHVAVLLISFLCLIGLVTQHAWSSNGLPRIDNKTLAKLSLQHPVVVLFRHAERCDRSSNECLSDKTGITVKGANDARSLGKELTTDIKKYDLYASDTVRTIQSATWFATDKKVTVDKKFQQCGKAIYSAINDVQIRSPDKNIIIFTHNHCLSYIAKDKRDVKFSPDYLDGLVMHVENGKLFLDGEFVRY.

The signal sequence occupies residues 1–25 (MKLKKHVAVLLISFLCLIGLVTQHA).

The protein belongs to the phosphoglycerate mutase family. Ais subfamily.

Its subcellular location is the periplasm. The protein operates within bacterial outer membrane biogenesis; lipopolysaccharide metabolism. Its function is as follows. Catalyzes the dephosphorylation of heptose(II) of the outer membrane lipopolysaccharide core. This Escherichia fergusonii (strain ATCC 35469 / DSM 13698 / CCUG 18766 / IAM 14443 / JCM 21226 / LMG 7866 / NBRC 102419 / NCTC 12128 / CDC 0568-73) protein is Lipopolysaccharide core heptose(II)-phosphate phosphatase.